The primary structure comprises 329 residues: DNA-directed RNA polymerase subunit alpha (329 aa).

Positions 1–235 (MQGSVTEFLK…EQLEAFVDLR (235 aa)) are alpha N-terminal domain (alpha-NTD). The alpha C-terminal domain (alpha-CTD) stretch occupies residues 249-329 (FDPILLRPVD…NWPPASIADE (81 aa)).

This sequence belongs to the RNA polymerase alpha chain family. As to quaternary structure, homodimer. The RNAP catalytic core consists of 2 alpha, 1 beta, 1 beta' and 1 omega subunit. When a sigma factor is associated with the core the holoenzyme is formed, which can initiate transcription.

It carries out the reaction RNA(n) + a ribonucleoside 5'-triphosphate = RNA(n+1) + diphosphate. Its function is as follows. DNA-dependent RNA polymerase catalyzes the transcription of DNA into RNA using the four ribonucleoside triphosphates as substrates. This is DNA-directed RNA polymerase subunit alpha from Pectobacterium atrosepticum (strain SCRI 1043 / ATCC BAA-672) (Erwinia carotovora subsp. atroseptica).